The following is a 161-amino-acid chain: 2-C-methyl-D-erythritol 2,4-cyclodiphosphate synthase (161 aa).

Residues aspartate 10 and histidine 12 each contribute to the a divalent metal cation site. 4-CDP-2-C-methyl-D-erythritol 2-phosphate contacts are provided by residues 10–12 (DVH) and 36–37 (HS). Histidine 44 provides a ligand contact to a divalent metal cation. Residues 58–60 (DIG), 63–67 (FPDTD), 102–108 (AQAPKMA), 134–137 (TTTE), phenylalanine 141, and arginine 144 contribute to the 4-CDP-2-C-methyl-D-erythritol 2-phosphate site.

Belongs to the IspF family. As to quaternary structure, homotrimer. A divalent metal cation serves as cofactor.

The catalysed reaction is 4-CDP-2-C-methyl-D-erythritol 2-phosphate = 2-C-methyl-D-erythritol 2,4-cyclic diphosphate + CMP. It functions in the pathway isoprenoid biosynthesis; isopentenyl diphosphate biosynthesis via DXP pathway; isopentenyl diphosphate from 1-deoxy-D-xylulose 5-phosphate: step 4/6. Functionally, involved in the biosynthesis of isopentenyl diphosphate (IPP) and dimethylallyl diphosphate (DMAPP), two major building blocks of isoprenoid compounds. Catalyzes the conversion of 4-diphosphocytidyl-2-C-methyl-D-erythritol 2-phosphate (CDP-ME2P) to 2-C-methyl-D-erythritol 2,4-cyclodiphosphate (ME-CPP) with a corresponding release of cytidine 5-monophosphate (CMP). This chain is 2-C-methyl-D-erythritol 2,4-cyclodiphosphate synthase, found in Shewanella baltica (strain OS155 / ATCC BAA-1091).